The chain runs to 580 residues: Dihydroxy-acid dehydratase (580 aa).

A Mg(2+)-binding site is contributed by Asp95. Cys136 serves as a coordination point for [2Fe-2S] cluster. Residues Asp137 and Lys138 each coordinate Mg(2+). At Lys138 the chain carries N6-carboxylysine. Cys209 serves as a coordination point for [2Fe-2S] cluster. Position 462 (Glu462) interacts with Mg(2+). Residue Ser488 is the Proton acceptor of the active site.

The protein belongs to the IlvD/Edd family. As to quaternary structure, homodimer. It depends on [2Fe-2S] cluster as a cofactor. Requires Mg(2+) as cofactor.

It carries out the reaction (2R)-2,3-dihydroxy-3-methylbutanoate = 3-methyl-2-oxobutanoate + H2O. It catalyses the reaction (2R,3R)-2,3-dihydroxy-3-methylpentanoate = (S)-3-methyl-2-oxopentanoate + H2O. The protein operates within amino-acid biosynthesis; L-isoleucine biosynthesis; L-isoleucine from 2-oxobutanoate: step 3/4. It functions in the pathway amino-acid biosynthesis; L-valine biosynthesis; L-valine from pyruvate: step 3/4. Its function is as follows. Functions in the biosynthesis of branched-chain amino acids. Catalyzes the dehydration of (2R,3R)-2,3-dihydroxy-3-methylpentanoate (2,3-dihydroxy-3-methylvalerate) into 2-oxo-3-methylpentanoate (2-oxo-3-methylvalerate) and of (2R)-2,3-dihydroxy-3-methylbutanoate (2,3-dihydroxyisovalerate) into 2-oxo-3-methylbutanoate (2-oxoisovalerate), the penultimate precursor to L-isoleucine and L-valine, respectively. The chain is Dihydroxy-acid dehydratase from Leuconostoc mesenteroides subsp. mesenteroides (strain ATCC 8293 / DSM 20343 / BCRC 11652 / CCM 1803 / JCM 6124 / NCDO 523 / NBRC 100496 / NCIMB 8023 / NCTC 12954 / NRRL B-1118 / 37Y).